We begin with the raw amino-acid sequence, 396 residues long: Alpha-1-antitrypsin (396 aa).

A signal peptide spans 1–2; the sequence is HV. The segment at 1-24 is disordered; sequence HVEDPQGDAAQKTDTSHHDQEHST. The span at 14 to 24 shows a compositional bias: basic and acidic residues; the sequence is DTSHHDQEHST. A Phosphoserine modification is found at serine 16. Asparagine 48, asparagine 85, asparagine 123, and asparagine 249 each carry an N-linked (GlcNAc...) asparagine glycan. Residues 351–370 form an RCL region; sequence GAMFLEAIPMSIPPEVKFNK. Serine 361 is modified (phosphoserine).

It belongs to the serpin family. In terms of assembly, interacts with CELA2A. Interacts with ERGIC3 and LMAN1/ERGIC53. Interacts with PRSS1/Trypsin. As to expression, plasma.

It is found in the secreted. In terms of biological role, inhibitor of serine proteases. Its primary target is elastase, but it also has a moderate affinity for plasmin and thrombin. Inhibits trypsin, chymotrypsin and plasminogen activator. In Chlorocebus aethiops (Green monkey), this protein is Alpha-1-antitrypsin (SERPINA1).